We begin with the raw amino-acid sequence, 198 residues long: Small ribosomal subunit protein uS11 (198 aa).

Low complexity-rich tracts occupy residues 1-11 and 19-58; these read MSGTEAGAGEP and EAAQ…TAQP. 2 disordered regions span residues 1–72 and 178–198; these read MSGT…TPAD and DVTP…GRRV. Residues 187 to 198 are compositionally biased toward basic residues; that stretch reads TRKKGGKRGRRV.

This sequence belongs to the universal ribosomal protein uS11 family. Part of the 30S ribosomal subunit.

Located on the platform of the 30S subunit. This chain is Small ribosomal subunit protein uS11, found in Cenarchaeum symbiosum (strain A).